Consider the following 428-residue polypeptide: Anaerobic glycerol-3-phosphate dehydrogenase subunit B (428 aa).

It belongs to the anaerobic G-3-P dehydrogenase subunit B family. As to quaternary structure, composed of a catalytic GlpA/B dimer and of membrane bound GlpC. Requires FMN as cofactor.

The catalysed reaction is a quinone + sn-glycerol 3-phosphate = dihydroxyacetone phosphate + a quinol. The protein operates within polyol metabolism; glycerol degradation via glycerol kinase pathway; glycerone phosphate from sn-glycerol 3-phosphate (anaerobic route): step 1/1. Functionally, conversion of glycerol 3-phosphate to dihydroxyacetone. Uses fumarate or nitrate as electron acceptor. The polypeptide is Anaerobic glycerol-3-phosphate dehydrogenase subunit B (Actinobacillus pleuropneumoniae serotype 5b (strain L20)).